The primary structure comprises 324 residues: Glyoxylate/hydroxypyruvate reductase B (324 aa).

Catalysis depends on residues arginine 237 and glutamate 266. The Proton donor role is filled by histidine 285.

This sequence belongs to the D-isomer specific 2-hydroxyacid dehydrogenase family. GhrB subfamily. As to quaternary structure, homodimer.

The protein localises to the cytoplasm. It catalyses the reaction glycolate + NADP(+) = glyoxylate + NADPH + H(+). The enzyme catalyses (R)-glycerate + NAD(+) = 3-hydroxypyruvate + NADH + H(+). It carries out the reaction (R)-glycerate + NADP(+) = 3-hydroxypyruvate + NADPH + H(+). In terms of biological role, catalyzes the NADPH-dependent reduction of glyoxylate and hydroxypyruvate into glycolate and glycerate, respectively. The polypeptide is Glyoxylate/hydroxypyruvate reductase B (Cronobacter sakazakii (strain ATCC BAA-894) (Enterobacter sakazakii)).